The following is a 184-amino-acid chain: Photosystem I assembly protein Ycf4 (184 aa).

Helical transmembrane passes span 24 to 44 and 57 to 77; these read WAFI…SSYI and IIFF…LFIS.

This sequence belongs to the Ycf4 family.

It is found in the plastid. The protein localises to the chloroplast thylakoid membrane. Functionally, seems to be required for the assembly of the photosystem I complex. In Buxus microphylla (Littleleaf boxwood), this protein is Photosystem I assembly protein Ycf4.